The following is a 160-amino-acid chain: Zinc finger A20 and AN1 domain-containing stress-associated protein 6 (160 aa).

The A20-type zinc-finger motif lies at 18-52 (PEAPILCVNNCGFFGSRMTENMCSKCYRDTVKAKT). Residues Cys24, Cys28, Cys40, and Cys43 each contribute to the Zn(2+) site. The tract at residues 73–94 (EVTDGGSGSVADGKQVMEEDTP) is disordered. The AN1-type zinc-finger motif lies at 95–141 (KPPSNRCLSCRKKVGLTGFKCRCGGTFCSMHRYADSHKCTFDYKQVG). 8 residues coordinate Zn(2+): Cys101, Cys104, Cys115, Cys117, Cys122, His125, His131, and Cys133.

May be involved in environmental stress response. This Oryza sativa subsp. japonica (Rice) protein is Zinc finger A20 and AN1 domain-containing stress-associated protein 6 (SAP6).